Reading from the N-terminus, the 1935-residue chain is Myosin heavy chain, fast skeletal muscle (1935 aa).

The region spanning 32-81 (DAKTAFFVVDPDEMYLKGTLVSKEGGKATVKTHSGKTVTVKEDEIFPMNP) is the Myosin N-terminal SH3-like domain. The 695-residue stretch at 85–779 (DKIEDMAMMT…LLGALEEMRD (695 aa)) folds into the Myosin motor domain. Lys-129 bears the N6,N6,N6-trimethyllysine mark. 178–185 (GESGAGKT) contacts ATP. Actin-binding regions lie at residues 659–681 (LMTN…ESKT) and 761–775 (HTKV…GALE). Residues 782–811 (LALLVTMTQALCRGYVMRKEFVKMMERRES) enclose the IQ domain. The tract at residues 812 to 839 (IYSIQYNIRSFMNVKHWPWMKLYFKIKP) is hinge. A coiled-coil region spans residues 840–1935 (LLKSAETEKE…RDAGKSKDEE (1096 aa)). Disordered regions lie at residues 1589–1608 (RNSQ…EVRS) and 1902–1935 (HELE…KDEE). Positions 1592 to 1603 (QRVIDSMQSTLD) are enriched in polar residues. Basic and acidic residues-rich tracts occupy residues 1902-1913 (HELEEAQERADV) and 1924-1935 (KSRDAGKSKDEE).

It belongs to the TRAFAC class myosin-kinesin ATPase superfamily. Myosin family. As to quaternary structure, muscle myosin is a hexameric protein that consists of 2 heavy chain subunits (MHC), 2 alkali light chain subunits (MLC) and 2 regulatory light chain subunits (MLC-2).

The protein localises to the cytoplasm. Its subcellular location is the myofibril. Functionally, muscle contraction. This Cyprinus carpio (Common carp) protein is Myosin heavy chain, fast skeletal muscle.